The primary structure comprises 130 residues: Chorion class B protein PC10 (130 aa).

The segment at 1-22 is left arm; that stretch reads GAWNGRLGCGCGGIAPAAELAA. Positions 23-93 are central domain; sequence SYGGGLGVAS…GNGALGITAE (71 aa). The right arm (Gly-rich tandem repeats) stretch occupies residues 94 to 130; it reads RGYGAGIGYEGLGLGYGAGIGYKGYGLGGCGCGCGRL.

Belongs to the chorion protein family.

Its function is as follows. This protein is one of many from the eggshell of the silk moth. This is Chorion class B protein PC10 from Antheraea polyphemus (Polyphemus moth).